The following is an 884-amino-acid chain: Protein P (884 aa).

Residues 1–184 (MHPFSRLFRN…GKPYSWEHRQ (184 aa)) form a terminal protein domain (TP) region. Residues 185–387 (LVQHNGQQHK…YCIHHIVSSL (203 aa)) form a spacer region. Positions 299 to 345 (RNSGHTTWFSSASNSNKSRSREKAYSSNSTSKRYSPPLNYEKSDFSS) are disordered. Residues 388 to 729 (DDWGPCTVTG…YEELWPVVRQ (342 aa)) are polymerase/reverse transcriptase domain (RT). In terms of domain architecture, Reverse transcriptase spans 398–639 (DVTIKSPRTP…NHLHFMGYVI (242 aa)). Asp-470, Asp-590, and Asp-591 together coordinate Mg(2+).

Belongs to the hepadnaviridae P protein family.

The catalysed reaction is DNA(n) + a 2'-deoxyribonucleoside 5'-triphosphate = DNA(n+1) + diphosphate. It carries out the reaction Endonucleolytic cleavage to 5'-phosphomonoester.. With respect to regulation, activated by host HSP70 and HSP40 in vitro to be able to bind the epsilon loop of the pgRNA. Because deletion of the RNase H region renders the protein partly chaperone-independent, the chaperones may be needed indirectly to relieve occlusion of the RNA-binding site by this domain. Inhibited by several reverse-transcriptase inhibitors: Lamivudine, Adefovir and Entecavir. Its function is as follows. Multifunctional enzyme that converts the viral RNA genome into dsDNA in viral cytoplasmic capsids. This enzyme displays a DNA polymerase activity that can copy either DNA or RNA templates, and a ribonuclease H (RNase H) activity that cleaves the RNA strand of RNA-DNA heteroduplexes in a partially processive 3'- to 5'-endonucleasic mode. Neo-synthesized pregenomic RNA (pgRNA) are encapsidated together with the P protein, and reverse-transcribed inside the nucleocapsid. Initiation of reverse-transcription occurs first by binding the epsilon loop on the pgRNA genome, and is initiated by protein priming, thereby the 5'-end of (-)DNA is covalently linked to P protein. Partial (+)DNA is synthesized from the (-)DNA template and generates the relaxed circular DNA (RC-DNA) genome. After budding and infection, the RC-DNA migrates in the nucleus, and is converted into a plasmid-like covalently closed circular DNA (cccDNA). The activity of P protein does not seem to be necessary for cccDNA generation, and is presumably released from (+)DNA by host nuclear DNA repair machinery. This is Protein P from Marmota monax (Woodchuck).